A 1043-amino-acid chain; its full sequence is Phosphatidylinositol 4,5-bisphosphate 3-kinase catalytic subunit delta isoform (1043 aa).

In terms of domain architecture, PI3K-ABD spans Glu16–Glu105. In terms of domain architecture, PI3K-RBD spans Asn187–His278. The tract at residues Asp287–Ser312 is disordered. Positions Leu319–Pro476 constitute a C2 PI3K-type domain. A PIK helical domain is found at Arg496–Gly673. At Tyr523 the chain carries Phosphotyrosine. A PI3K/PI4K catalytic domain is found at Cys744 to Trp1026. Residues Phe750 to Lys756 form a G-loop region. Residues Gly889–Asn897 form a catalytic loop region. Residues His908–Thr934 are activation loop. At Ser1038 the chain carries Phosphoserine; by autocatalysis.

It belongs to the PI3/PI4-kinase family. In terms of assembly, heterodimer of a catalytic subunit PIK3CD and a p85 regulatory subunit (PIK3R1, PIK3R2 or PIK3R3). Interacts with ERAS and HRAS. In terms of processing, autophosphorylation on Ser-1038 results in the almost complete inactivation of the lipid kinase activity. Abundantly expressed in adult mouse spleen as well as in testis. Isoform 1 is expressed in spleen and lung (at protein level). Isoform 1 is expressed predominantly in leukocytes.

The protein resides in the cytoplasm. It catalyses the reaction a 1,2-diacyl-sn-glycero-3-phospho-(1D-myo-inositol-4,5-bisphosphate) + ATP = a 1,2-diacyl-sn-glycero-3-phospho-(1D-myo-inositol-3,4,5-trisphosphate) + ADP + H(+). The enzyme catalyses a 1,2-diacyl-sn-glycero-3-phospho-(1D-myo-inositol) + ATP = a 1,2-diacyl-sn-glycero-3-phospho-(1D-myo-inositol-3-phosphate) + ADP + H(+). The catalysed reaction is 1-octadecanoyl-2-(5Z,8Z,11Z,14Z)-eicosatetraenoyl-sn-glycero-3-phospho-1D-myo-inositol 4,5-bisphosphate + ATP = 1-octadecanoyl-2-(5Z,8Z,11Z,14Z-eicosatetraenoyl)-sn-glycero-3-phospho-(1D-myo-inositol 3,4,5-triphosphate) + ADP + H(+). It functions in the pathway phospholipid metabolism; phosphatidylinositol phosphate biosynthesis. Its activity is regulated as follows. Activated by growth factors and cytokine receptors through a tyrosine-kinase-dependent mechanism. Activated by RAS. IC87114 inhibits lipid kinase activity and is selective in cells at doses up to 5-10 uM. Among other effects, IC87114 reduces allergic responses, prevents the recruitment of antigen-specific T cells into target tissue, and affects natural killer cell chemotaxis. Functionally, phosphoinositide-3-kinase (PI3K) phosphorylates phosphatidylinositol (PI) and its phosphorylated derivatives at position 3 of the inositol ring to produce 3-phosphoinositides. Uses ATP and PtdIns(4,5)P2 (phosphatidylinositol 4,5-bisphosphate) to generate phosphatidylinositol 3,4,5-trisphosphate (PIP3). PIP3 plays a key role by recruiting PH domain-containing proteins to the membrane, including AKT1 and PDPK1, activating signaling cascades involved in cell growth, survival, proliferation, motility and morphology. Mediates immune responses. Plays a role in B-cell development, proliferation, migration, and function. Required for B-cell receptor (BCR) signaling. Mediates B-cell proliferation response to anti-IgM, anti-CD40 and IL4 stimulation. Promotes cytokine production in response to TLR4 and TLR9. Required for antibody class switch mediated by TLR9. Involved in the antigen presentation function of B-cells. Involved in B-cell chemotaxis in response to CXCL13 and sphingosine 1-phosphate (S1P). Required for proliferation, signaling and cytokine production of naive, effector and memory T-cells. Required for T-cell receptor (TCR) signaling. Mediates TCR signaling events at the immune synapse. Activation by TCR leads to antigen-dependent memory T-cell migration and retention to antigenic tissues. Together with PIK3CG participates in T-cell development. Contributes to T-helper cell expansion and differentiation. Required for T-cell migration mediated by homing receptors SELL/CD62L, CCR7 and S1PR1 and antigen dependent recruitment of T-cells. Together with PIK3CG is involved in natural killer (NK) cell development and migration towards the sites of inflammation. Participates in NK cell receptor activation. Plays a role in NK cell maturation and cytokine production. Together with PIK3CG is involved in neutrophil chemotaxis and extravasation. Together with PIK3CG participates in neutrophil respiratory burst. Plays important roles in mast-cell development and mast cell mediated allergic response. Involved in stem cell factor (SCF)-mediated proliferation, adhesion and migration. Required for allergen-IgE-induced degranulation and cytokine release. The lipid kinase activity is required for its biological function. The chain is Phosphatidylinositol 4,5-bisphosphate 3-kinase catalytic subunit delta isoform (Pik3cd) from Mus musculus (Mouse).